A 438-amino-acid polypeptide reads, in one-letter code: Protein DJ-1 homolog B (438 aa).

The transit peptide at 1-45 (MASSSLCHRYFNKITVTPFFNTKKLHHYSPRRISLRVNRRSFSIS) directs the protein to the chloroplast. PfpI endopeptidase domains follow at residues 53-220 (KKVL…EQLL) and 258-424 (PQIL…EKFY).

The protein belongs to the peptidase C56 family. In terms of assembly, homodimer.

It is found in the plastid. Its subcellular location is the chloroplast. Functionally, may be involved in oxidative stress response. The chain is Protein DJ-1 homolog B (DJ1B) from Arabidopsis thaliana (Mouse-ear cress).